Reading from the N-terminus, the 656-residue chain is L-type lectin-domain containing receptor kinase S.1 (656 aa).

The signal sequence occupies residues 1-29 (MSWQWRRRQWPSPLLLILIVLHLVSSSSA). The segment at 30-273 (IDFLYNSFSS…ARRILAWSLS (244 aa)) is legume-lectin like. The Extracellular segment spans residues 30-304 (IDFLYNSFSS…SSSLSTGAIA (275 aa)). 8 N-linked (GlcNAc...) asparagine glycosylation sites follow: asparagine 42, asparagine 63, asparagine 121, asparagine 139, asparagine 191, asparagine 219, asparagine 282, and asparagine 293. The chain crosses the membrane as a helical span at residues 305–325 (GIVIGCVVFVALIGFGGYLIW). At 326-656 (KKLMREEEEE…AAADSTAAHA (331 aa)) the chain is on the cytoplasmic side. A Protein kinase domain is found at 361–639 (FSNDRLLGSG…LLGSPQEDLL (279 aa)). Residues 367-375 (LGSGGFGKV) and lysine 389 contribute to the ATP site. Aspartate 485 (proton acceptor) is an active-site residue.

In the C-terminal section; belongs to the protein kinase superfamily. Ser/Thr protein kinase family. The protein in the N-terminal section; belongs to the leguminous lectin family.

Its subcellular location is the cell membrane. It catalyses the reaction L-seryl-[protein] + ATP = O-phospho-L-seryl-[protein] + ADP + H(+). It carries out the reaction L-threonyl-[protein] + ATP = O-phospho-L-threonyl-[protein] + ADP + H(+). Functionally, involved in resistance response to the pathogenic oomycetes Phytophthora infestans and Phytophthora capsici and to the pathogenic bacteria Pseudomonas syringae. This chain is L-type lectin-domain containing receptor kinase S.1, found in Arabidopsis thaliana (Mouse-ear cress).